A 541-amino-acid chain; its full sequence is Chaperonin GroEL 2 (541 aa).

Residues 29-32 (TLGP), 86-90 (DGTTT), Gly-413, and Asp-492 contribute to the ATP site.

Belongs to the chaperonin (HSP60) family. As to quaternary structure, forms a cylinder of 14 subunits composed of two heptameric rings stacked back-to-back. Interacts with the co-chaperonin GroES.

Its subcellular location is the cytoplasm. The catalysed reaction is ATP + H2O + a folded polypeptide = ADP + phosphate + an unfolded polypeptide.. Functionally, together with its co-chaperonin GroES, plays an essential role in assisting protein folding. The GroEL-GroES system forms a nano-cage that allows encapsulation of the non-native substrate proteins and provides a physical environment optimized to promote and accelerate protein folding. In Acidothermus cellulolyticus (strain ATCC 43068 / DSM 8971 / 11B), this protein is Chaperonin GroEL 2.